We begin with the raw amino-acid sequence, 159 residues long: Anaerobic nitrite reductase HB2 (159 aa).

One can recognise a Globin domain in the interval 2 to 152 (GFTEKQEGLV…LAEAIKAEMK (151 aa)). The short motif at 35–39 (EIAPG) is the Homodimerization element. 4 residues coordinate heme b: S45, K59, H63, and H98. The Homodimerization signature appears at 105-117 (DPHFEVVKEALLR).

This sequence belongs to the plant globin family. In terms of assembly, homodimer. It depends on heme b as a cofactor.

The protein localises to the cytoplasm. Its subcellular location is the nucleus. The enzyme catalyses Fe(III)-heme b-[protein] + nitric oxide + H2O = Fe(II)-heme b-[protein] + nitrite + 2 H(+). Phytoglobin that reduces nitrite to nitric oxide (NO) under anoxic conditions (e.g. during flooding or in waterlogged soil). May not function as an oxygen storage or transport protein. Has an unusually high affinity for O(2) through an hexacoordinate heme iron because of a very low dissociation constant. In Gossypium hirsutum (Upland cotton), this protein is Anaerobic nitrite reductase HB2.